A 503-amino-acid chain; its full sequence is Glutamate--tRNA ligase (503 aa).

The 'HIGH' region motif lies at Pro15 to Gly25. The short motif at Lys262–Arg266 is the 'KMSKS' region element. Lys265 is an ATP binding site.

Belongs to the class-I aminoacyl-tRNA synthetase family. Glutamate--tRNA ligase type 1 subfamily. In terms of assembly, monomer.

It is found in the cytoplasm. It carries out the reaction tRNA(Glu) + L-glutamate + ATP = L-glutamyl-tRNA(Glu) + AMP + diphosphate. Catalyzes the attachment of glutamate to tRNA(Glu) in a two-step reaction: glutamate is first activated by ATP to form Glu-AMP and then transferred to the acceptor end of tRNA(Glu). In Chlorobium phaeobacteroides (strain BS1), this protein is Glutamate--tRNA ligase.